Consider the following 788-residue polypeptide: Integrin beta-6 (788 aa).

Residues 1-21 (MGIELLCLFFLCLGRNDHVQG) form the signal peptide. The 50-residue stretch at 22–71 (GCAVGGAETCEDCLLIGPQCAWCSQENFTHLSGVGERCDTPANLLAKGCQ) folds into the PSI domain. At 22–709 (GCAVGGAETC…KDCPKPPNIP (688 aa)) the chain is on the extracellular side. Intrachain disulfides connect C23–C41, C31–C454, C34–C59, C44–C70, C197–C204, C252–C293, C394–C406, C426–C452, C456–C476, C467–C479, C481–C490, C492–C519, C502–C517, C511–C522, C524–C537, C539–C560, C544–C558, C552–C563, and C565–C574. Residues N48 and N97 are each glycosylated (N-linked (GlcNAc...) asparagine). The region spanning 131-371 (YPVDLYYLMD…QLIISAYEEL (241 aa)) is the VWFA domain. Mg(2+)-binding residues include D140, S142, and S144. The Ca(2+) site is built by S144, D147, D148, and E179. The Ca(2+) site is built by N235, D237, P239, and E240. Residue E240 coordinates Mg(2+). An N-linked (GlcNAc...) asparagine glycan is attached at N260. Ca(2+) is bound by residues D271 and K355. N-linked (GlcNAc...) asparagine glycosylation is present at N387. N418 carries an N-linked (GlcNAc...) asparagine glycan. I-EGF domains lie at 456-491 (CQKEVEVNSSKCNNGNGSFQCGVCACHPGHMGHHCE), 492-538 (CGED…PYCQ), 539-575 (CDNFSCVRHKGLLCGDNGDCDCGECVCRSGWTGEYCN), and 576-615 (CTTSTDPCVSEDGILCSGRGDCVCGKCICTNPGASGPTCE). N-linked (GlcNAc...) asparagine glycosylation is found at N463 and N471. An N-linked (GlcNAc...) asparagine glycan is attached at N541. N575 is a glycosylation site (N-linked (GlcNAc...) asparagine). 9 disulfides stabilise this stretch: C576/C599, C583/C597, C591/C602, C604/C614, C617/C620, C624/C670, C630/C649, C633/C645, and C678/C702. A helical membrane pass occupies residues 710-730 (MIMLGVSLAILLIGVVLLCIW). Positions 731-758 (KLLVSFHDRKEVAKFEAERSKAKWQTGT) are interaction with HAX1. Topologically, residues 731–788 (KLLVSFHDRKEVAKFEAERSKAKWQTGTNPLYRGSTSTFKNVTYKHKEKQKVDLSTDG) are cytoplasmic.

It belongs to the integrin beta chain family. As to quaternary structure, heterodimer of an alpha and a beta subunit. Interacts with FLNB. Interacts with HAX1. ITGAV:ITGB6 interacts with FBN1. ITGAV:ITGB6 interacts with TGFB1.

The protein localises to the cell membrane. It is found in the cell junction. Its subcellular location is the focal adhesion. Integrin alpha-V:beta-6 (ITGAV:ITGB6) is a receptor for fibronectin and cytotactin. It recognizes the sequence R-G-D in its ligands. ITGAV:ITGB6 acts as a receptor for fibrillin-1 (FBN1) and mediates R-G-D-dependent cell adhesion to FBN1. Integrin alpha-V:beta-6 (ITGAV:ITGB6) mediates R-G-D-dependent release of transforming growth factor beta-1 (TGF-beta-1) from regulatory Latency-associated peptide (LAP), thereby playing a key role in TGF-beta-1 activation. This is Integrin beta-6 (ITGB6) from Bos taurus (Bovine).